An 837-amino-acid polypeptide reads, in one-letter code: PE-PGRS family protein PE_PGRS4 (837 aa).

The region spanning 4 to 94 (VIAAPEVIAA…GAYAAAEAAA (91 aa)) is the PE domain. Positions 811 to 825 (NGGKAGGTPGAGGTS) are enriched in gly residues. Positions 811–837 (NGGKAGGTPGAGGTSGLIIGENGLNGL) are disordered. A compositionally biased stretch (low complexity) spans 826-837 (GLIIGENGLNGL).

This sequence belongs to the mycobacterial PE family. PGRS subfamily.

This chain is PE-PGRS family protein PE_PGRS4, found in Mycobacterium tuberculosis (strain ATCC 25618 / H37Rv).